The chain runs to 188 residues: Ras-related protein Rap-1 (188 aa).

10–17 (GSGGVGKS) contributes to the GTP binding site. The Effector region motif lies at 32-40 (YDPTIEDSY). GTP contacts are provided by residues 57–61 (DTAGT) and 116–119 (NKCD).

It belongs to the small GTPase superfamily. Ras family.

It catalyses the reaction GTP + H2O = GDP + phosphate + H(+). Functionally, required in the hypodermis for proper formation of the cuticle. The polypeptide is Ras-related protein Rap-1 (rap-1) (Caenorhabditis elegans).